A 269-amino-acid polypeptide reads, in one-letter code: Glutamate racemase (269 aa).

Substrate contacts are provided by residues 13–14 (DS) and 45–46 (YS). Residue cysteine 77 is the Proton donor/acceptor of the active site. A substrate-binding site is contributed by 78–79 (NT). Cysteine 188 serves as the catalytic Proton donor/acceptor. 189-190 (TH) is a binding site for substrate.

The protein belongs to the aspartate/glutamate racemases family.

The enzyme catalyses L-glutamate = D-glutamate. It functions in the pathway cell wall biogenesis; peptidoglycan biosynthesis. Its function is as follows. Provides the (R)-glutamate required for cell wall biosynthesis. The polypeptide is Glutamate racemase (Pasteurella multocida (strain Pm70)).